Consider the following 150-residue polypeptide: Putative ribosome maturation factor RimP (150 aa).

The protein belongs to the RimP family.

Its subcellular location is the cytoplasm. In terms of biological role, required for maturation of 30S ribosomal subunits. This chain is Putative ribosome maturation factor RimP, found in Mycobacterium leprae (strain TN).